A 306-amino-acid polypeptide reads, in one-letter code: Porphobilinogen deaminase (306 aa).

Position 234 is an S-(dipyrrolylmethanemethyl)cysteine (Cys234).

Belongs to the HMBS family. Monomer. Dipyrromethane is required as a cofactor.

The enzyme catalyses 4 porphobilinogen + H2O = hydroxymethylbilane + 4 NH4(+). It participates in porphyrin-containing compound metabolism; protoporphyrin-IX biosynthesis; coproporphyrinogen-III from 5-aminolevulinate: step 2/4. Its function is as follows. Tetrapolymerization of the monopyrrole PBG into the hydroxymethylbilane pre-uroporphyrinogen in several discrete steps. In Mycobacteroides abscessus (strain ATCC 19977 / DSM 44196 / CCUG 20993 / CIP 104536 / JCM 13569 / NCTC 13031 / TMC 1543 / L948) (Mycobacterium abscessus), this protein is Porphobilinogen deaminase.